The chain runs to 393 residues: NAD(P)H-quinone oxidoreductase subunit H, chloroplastic (393 aa).

This sequence belongs to the complex I 49 kDa subunit family. As to quaternary structure, NDH is composed of at least 16 different subunits, 5 of which are encoded in the nucleus.

It is found in the plastid. The protein localises to the chloroplast thylakoid membrane. It catalyses the reaction a plastoquinone + NADH + (n+1) H(+)(in) = a plastoquinol + NAD(+) + n H(+)(out). The catalysed reaction is a plastoquinone + NADPH + (n+1) H(+)(in) = a plastoquinol + NADP(+) + n H(+)(out). Its function is as follows. NDH shuttles electrons from NAD(P)H:plastoquinone, via FMN and iron-sulfur (Fe-S) centers, to quinones in the photosynthetic chain and possibly in a chloroplast respiratory chain. The immediate electron acceptor for the enzyme in this species is believed to be plastoquinone. Couples the redox reaction to proton translocation, and thus conserves the redox energy in a proton gradient. This Zygnema circumcarinatum (Green alga) protein is NAD(P)H-quinone oxidoreductase subunit H, chloroplastic.